Consider the following 277-residue polypeptide: Large ribosomal subunit protein uL2 (277 aa).

Positions 222–277 (GVAMNPVDHPHGGGEGRTSGGRHPVSPWGKPTKGKRTRSNKATDKFIMRSRHQRKK) are disordered.

The protein belongs to the universal ribosomal protein uL2 family. Part of the 50S ribosomal subunit. Forms a bridge to the 30S subunit in the 70S ribosome.

Its function is as follows. One of the primary rRNA binding proteins. Required for association of the 30S and 50S subunits to form the 70S ribosome, for tRNA binding and peptide bond formation. It has been suggested to have peptidyltransferase activity; this is somewhat controversial. Makes several contacts with the 16S rRNA in the 70S ribosome. The sequence is that of Large ribosomal subunit protein uL2 from Bartonella bacilliformis (strain ATCC 35685 / KC583 / Herrer 020/F12,63).